A 345-amino-acid polypeptide reads, in one-letter code: V-type proton ATPase subunit d (345 aa).

Methionine 1 is modified (N-acetylmethionine).

Belongs to the V-ATPase V0D/AC39 subunit family. V-ATPase is a heteromultimeric enzyme composed of a peripheral catalytic V1 complex (components A to H) attached to an integral membrane V0 proton pore complex (components: a, c, c', c'', d, e, f and VOA1).

The protein localises to the vacuole membrane. Its function is as follows. Subunit of the V0 complex of vacuolar(H+)-ATPase (V-ATPase), a multisubunit enzyme composed of a peripheral complex (V1) that hydrolyzes ATP and a membrane integral complex (V0) that translocates protons. V-ATPase is responsible for acidifying and maintaining the pH of intracellular compartments. This subunit is a non-integral membrane component of the membrane pore domain and is required for proper assembly of the V0 sector. Might be involved in the regulated assembly of V1 subunits onto the membrane sector or alternatively may prevent the passage of protons through V0 pores. In Saccharomyces cerevisiae (strain ATCC 204508 / S288c) (Baker's yeast), this protein is V-type proton ATPase subunit d.